A 95-amino-acid polypeptide reads, in one-letter code: MKLRPLHDRILVKRVEEETKTAGGLFIPETAKEKPQRGEVVAAGNGKKTEDGKVLPLDVKVGDKVLFGKYSGTEVKVDGEDFLMMREDDILAVVE.

The protein belongs to the GroES chaperonin family. Heptamer of 7 subunits arranged in a ring. Interacts with the chaperonin GroEL.

The protein localises to the cytoplasm. Functionally, together with the chaperonin GroEL, plays an essential role in assisting protein folding. The GroEL-GroES system forms a nano-cage that allows encapsulation of the non-native substrate proteins and provides a physical environment optimized to promote and accelerate protein folding. GroES binds to the apical surface of the GroEL ring, thereby capping the opening of the GroEL channel. The sequence is that of Co-chaperonin GroES from Pelobacter propionicus (strain DSM 2379 / NBRC 103807 / OttBd1).